The sequence spans 254 residues: Proteasome subunit alpha (254 aa).

Residues 234–254 are disordered; the sequence is EEMLPTPAATEDAPANGDAPS.

It belongs to the peptidase T1A family. As to quaternary structure, the 20S proteasome core is composed of 14 alpha and 14 beta subunits that assemble into four stacked heptameric rings, resulting in a barrel-shaped structure. The two inner rings, each composed of seven catalytic beta subunits, are sandwiched by two outer rings, each composed of seven alpha subunits. The catalytic chamber with the active sites is on the inside of the barrel. Has a gated structure, the ends of the cylinder being occluded by the N-termini of the alpha-subunits. Is capped by the proteasome-associated ATPase, ARC.

The protein resides in the cytoplasm. It participates in protein degradation; proteasomal Pup-dependent pathway. The formation of the proteasomal ATPase ARC-20S proteasome complex, likely via the docking of the C-termini of ARC into the intersubunit pockets in the alpha-rings, may trigger opening of the gate for substrate entry. Interconversion between the open-gate and close-gate conformations leads to a dynamic regulation of the 20S proteasome proteolysis activity. Its function is as follows. Component of the proteasome core, a large protease complex with broad specificity involved in protein degradation. This is Proteasome subunit alpha from Rhodococcus erythropolis (strain PR4 / NBRC 100887).